Reading from the N-terminus, the 107-residue chain is U1-lycotoxin-Ls1b (107 aa).

The first 20 residues, 1-20 (MMKVLVVIALLVTLISYSSS), serve as a signal peptide directing secretion. The propeptide occupies 21–41 (EGIDDLEADELLSLMANEQTR). 4 disulfide bridges follow: C44-C59, C51-C68, C58-C86, and C70-C84.

The protein belongs to the neurotoxin 19 (CSTX) family. 04 (U1-Lctx) subfamily. In terms of tissue distribution, expressed by the venom gland.

It is found in the secreted. This is U1-lycotoxin-Ls1b from Lycosa singoriensis (Wolf spider).